Reading from the N-terminus, the 415-residue chain is Diaminopimelate decarboxylase (415 aa).

K54 is modified (N6-(pyridoxal phosphate)lysine). Pyridoxal 5'-phosphate contacts are provided by residues G223 and 264–267 (EPGR). R267, R303, and Y307 together coordinate substrate. The active-site Proton donor is the C338. The substrate site is built by E339 and Y374. A pyridoxal 5'-phosphate-binding site is contributed by Y374.

Belongs to the Orn/Lys/Arg decarboxylase class-II family. LysA subfamily. Homodimer. Pyridoxal 5'-phosphate is required as a cofactor.

The catalysed reaction is meso-2,6-diaminopimelate + H(+) = L-lysine + CO2. It functions in the pathway amino-acid biosynthesis; L-lysine biosynthesis via DAP pathway; L-lysine from DL-2,6-diaminopimelate: step 1/1. Specifically catalyzes the decarboxylation of meso-diaminopimelate (meso-DAP) to L-lysine. The protein is Diaminopimelate decarboxylase of Buchnera aphidicola subsp. Acyrthosiphon pisum (strain APS) (Acyrthosiphon pisum symbiotic bacterium).